A 342-amino-acid chain; its full sequence is Protein-glutamate methylesterase/protein-glutamine glutaminase 4 (342 aa).

Positions 2 to 119 (NIGIVNDLPL…GGSADPSQPL (118 aa)) constitute a Response regulatory domain. Residue Asp53 is modified to 4-aspartylphosphate. The CheB-type methylesterase domain occupies 144 to 337 (PAPQGALPPL…DQLISLVQRN (194 aa)). Active-site residues include Ser159, His186, and Asp279.

The protein belongs to the CheB family. Phosphorylated by CheA. Phosphorylation of the N-terminal regulatory domain activates the methylesterase activity.

Its subcellular location is the cytoplasm. It catalyses the reaction [protein]-L-glutamate 5-O-methyl ester + H2O = L-glutamyl-[protein] + methanol + H(+). The enzyme catalyses L-glutaminyl-[protein] + H2O = L-glutamyl-[protein] + NH4(+). In terms of biological role, involved in chemotaxis. Part of a chemotaxis signal transduction system that modulates chemotaxis in response to various stimuli. Catalyzes the demethylation of specific methylglutamate residues introduced into the chemoreceptors (methyl-accepting chemotaxis proteins or MCP) by CheR. Also mediates the irreversible deamidation of specific glutamine residues to glutamic acid. In Burkholderia thailandensis (strain ATCC 700388 / DSM 13276 / CCUG 48851 / CIP 106301 / E264), this protein is Protein-glutamate methylesterase/protein-glutamine glutaminase 4.